A 424-amino-acid polypeptide reads, in one-letter code: Phosphoribosylamine--glycine ligase (424 aa).

The 207-residue stretch at 107-313 folds into the ATP-grasp domain; it reads KTFMKKYGIP…FLETLLNFYE (207 aa). Position 133 to 194 (133 to 194) interacts with ATP; the sequence is VEKVGAPIVV…EEFLEGEEAS (62 aa). 2 residues coordinate Mg(2+): Glu-283 and Asn-285.

This sequence belongs to the GARS family. Mg(2+) serves as cofactor. Mn(2+) is required as a cofactor.

The catalysed reaction is 5-phospho-beta-D-ribosylamine + glycine + ATP = N(1)-(5-phospho-beta-D-ribosyl)glycinamide + ADP + phosphate + H(+). Its pathway is purine metabolism; IMP biosynthesis via de novo pathway; N(1)-(5-phospho-D-ribosyl)glycinamide from 5-phospho-alpha-D-ribose 1-diphosphate: step 2/2. The polypeptide is Phosphoribosylamine--glycine ligase (Aquifex aeolicus (strain VF5)).